A 282-amino-acid chain; its full sequence is MISNFNLSYSLKHVSSCFIFSDNNDPINKLINSLNSNLNLKVRLPSDYNLLADEFLPPNQSVLIDFKDIDDNWFSKAKHLPSLFSNRRSPYFPTLAQKHILESLKTVPVYTIVNDLNEIVIASPRDLTNFNSFNWVKRFYNDWFIWEKDEGNVNIGLFFMNREDAELYLHQICLKDPRGVENVGVNVKTISLDTFYKLNRLSPPRLQFKLIADLQEIKNILNVNSNSRVSFHPKQKYDKNWFKGIPIFIYSPTVTNLDWTLKSNKNMIFFQEMMHIMFQKIY.

The protein belongs to the ycf80 family.

Its subcellular location is the plastid. The protein localises to the chloroplast. This is an uncharacterized protein from Guillardia theta (Cryptophyte).